Here is a 478-residue protein sequence, read N- to C-terminus: Ubiquitin carboxyl-terminal hydrolase calypso (478 aa).

The UCH catalytic domain occupies 11-239 (GWLELESDPG…IRFNLMAVVP (229 aa)). Cys97 acts as the Nucleophile in catalysis. His176 (proton donor) is an active-site residue. The 29-residue stretch at 400 to 428 (NYDEFICTFLSMLAHQGELGDLVSQHLIT) folds into the ULD domain. The positively charged C-terminal tail required for binding nucleosomes stretch occupies residues 430–478 (RKPNMGSVQNSGSRGVVRNYNKKTTTNGSSPKTPSSKRRRGRTKYRKRK). A compositionally biased stretch (polar residues) spans 432 to 442 (PNMGSVQNSGS). A disordered region spans residues 432–478 (PNMGSVQNSGSRGVVRNYNKKTTTNGSSPKTPSSKRRRGRTKYRKRK). The segment covering 464–478 (SSKRRRGRTKYRKRK) has biased composition (basic residues).

The protein belongs to the peptidase C12 family. BAP1 subfamily. Catalytic component of the polycomb repressive deubiquitinase (PR-DUB) complex, at least composed of caly/calypso, Asx and sba (MBD5/6 homolog). The PR-DUB complex associates with nucleosomes to mediate deubiquitination of histone H2AK118ub1 substrates; the association requires the positively charged C-terminal tail of caly, probably due to direct binding of DNA. Interacts (via ULD domain) with Asx (via DEUBAD domain); the interaction produces a stable heterodimer with a composite binding site for ubiquitin. Homodimerizes (via coiled-coil hinge-region between the UCH and ULD domains) to mediate assembly of 2 copies of the caly-Asx heterodimer into a bisymmetric tetramer; dimerization enhances PR-DUB association with nucleosomes.

It is found in the nucleus. It catalyses the reaction Thiol-dependent hydrolysis of ester, thioester, amide, peptide and isopeptide bonds formed by the C-terminal Gly of ubiquitin (a 76-residue protein attached to proteins as an intracellular targeting signal).. In terms of biological role, catalytic component of the polycomb repressive deubiquitinase (PR-DUB) complex, a complex that specifically mediates deubiquitination of histone H2A monoubiquitinated at 'Lys-119' (H2AK118ub1). Mediates bisymmetric organization of the PR-DUB complex and is involved in association with nucleosomes to mediate deubiquitination. Does not deubiquitinate monoubiquitinated histone H2B. Required to maintain the transcriptionally repressive state of homeotic genes throughout development. The PR-DUB complex has weak or no activity toward 'Lys-48'- and 'Lys-63'-linked polyubiquitin chains. Polycomb group (PcG) protein. This is Ubiquitin carboxyl-terminal hydrolase calypso from Aedes aegypti (Yellowfever mosquito).